The following is a 213-amino-acid chain: Calcineurin B-like protein 8 (213 aa).

G2 carries the N-myristoyl glycine lipid modification. EF-hand domains follow at residues 31–66, 67–102, 104–139, and 148–183; these read EVEA…RNSN, KKNL…FHPE, PLGD…LLNE, and AVEQ…NPAL. Positions 161, 163, 165, 167, and 172 each coordinate Ca(2+).

Belongs to the calcineurin regulatory subunit family. As to quaternary structure, homodimer. In terms of tissue distribution, expressed at low levels in roots, shoots, culms, leaves and young spikelets.

It is found in the cell membrane. In terms of biological role, acts as a calcium sensor. May function as positive regulator of salt stress responses. CBL proteins interact with CIPK serine-threonine protein kinases. Binding of a CBL protein to the regulatory NAF domain of a CIPK protein lead to the activation of the kinase in a calcium-dependent manner. This chain is Calcineurin B-like protein 8 (CBL8), found in Oryza sativa subsp. japonica (Rice).